The sequence spans 203 residues: ATP-dependent Clp protease proteolytic subunit (203 aa).

Ser107 acts as the Nucleophile in catalysis. Residue His132 is part of the active site.

This sequence belongs to the peptidase S14 family. As to quaternary structure, fourteen ClpP subunits assemble into 2 heptameric rings which stack back to back to give a disk-like structure with a central cavity, resembling the structure of eukaryotic proteasomes.

It is found in the cytoplasm. The enzyme catalyses Hydrolysis of proteins to small peptides in the presence of ATP and magnesium. alpha-casein is the usual test substrate. In the absence of ATP, only oligopeptides shorter than five residues are hydrolyzed (such as succinyl-Leu-Tyr-|-NHMec, and Leu-Tyr-Leu-|-Tyr-Trp, in which cleavage of the -Tyr-|-Leu- and -Tyr-|-Trp bonds also occurs).. Functionally, cleaves peptides in various proteins in a process that requires ATP hydrolysis. Has a chymotrypsin-like activity. Plays a major role in the degradation of misfolded proteins. The sequence is that of ATP-dependent Clp protease proteolytic subunit from Shewanella denitrificans (strain OS217 / ATCC BAA-1090 / DSM 15013).